The chain runs to 92 residues: MNEEYWILEVKVTPKSRENKIVGFEGEVLKIRVTEAPEKGKANEAVIALLAKTLSLPKRDVTLISGETSRKKRLLLPKSTESIISHWREHGL.

Belongs to the UPF0235 family.

This is UPF0235 protein CCA_00247 from Chlamydia caviae (strain ATCC VR-813 / DSM 19441 / 03DC25 / GPIC) (Chlamydophila caviae).